Reading from the N-terminus, the 21-residue chain is thr operon leader peptide (21 aa).

It belongs to the thr operon leader peptide family.

This protein is involved in control of the biosynthesis of threonine. The sequence is that of thr operon leader peptide from Shigella boydii serotype 18 (strain CDC 3083-94 / BS512).